A 227-amino-acid polypeptide reads, in one-letter code: 7-cyano-7-deazaguanine synthase (227 aa).

8 to 18 (FSGGQDSTTCL) provides a ligand contact to ATP. Positions 187, 196, 199, and 202 each coordinate Zn(2+).

The protein belongs to the QueC family. Requires Zn(2+) as cofactor.

The catalysed reaction is 7-carboxy-7-deazaguanine + NH4(+) + ATP = 7-cyano-7-deazaguanine + ADP + phosphate + H2O + H(+). It functions in the pathway purine metabolism; 7-cyano-7-deazaguanine biosynthesis. Catalyzes the ATP-dependent conversion of 7-carboxy-7-deazaguanine (CDG) to 7-cyano-7-deazaguanine (preQ(0)). The polypeptide is 7-cyano-7-deazaguanine synthase (Aliivibrio fischeri (strain ATCC 700601 / ES114) (Vibrio fischeri)).